Consider the following 111-residue polypeptide: UPF0060 membrane protein Cbei_2176 (111 aa).

4 helical membrane-spanning segments follow: residues 7-27 (ILYF…IWIW), 33-53 (SYLY…IPTL), 60-80 (FGKV…LWGW), and 85-105 (IVPD…VIVI).

The protein belongs to the UPF0060 family.

It localises to the cell membrane. The protein is UPF0060 membrane protein Cbei_2176 of Clostridium beijerinckii (strain ATCC 51743 / NCIMB 8052) (Clostridium acetobutylicum).